A 265-amino-acid chain; its full sequence is Phosphate import ATP-binding protein PstB 2 (265 aa).

An ABC transporter domain is found at 13–260 (FRTENLNVYY…PTKQATRDYV (248 aa)). 45 to 52 (GPSGCGKS) is a binding site for ATP.

It belongs to the ABC transporter superfamily. Phosphate importer (TC 3.A.1.7) family. As to quaternary structure, the complex is composed of two ATP-binding proteins (PstB), two transmembrane proteins (PstC and PstA) and a solute-binding protein (PstS).

The protein resides in the cell inner membrane. The catalysed reaction is phosphate(out) + ATP + H2O = ADP + 2 phosphate(in) + H(+). Part of the ABC transporter complex PstSACB involved in phosphate import. Responsible for energy coupling to the transport system. This Synechococcus sp. (strain JA-3-3Ab) (Cyanobacteria bacterium Yellowstone A-Prime) protein is Phosphate import ATP-binding protein PstB 2.